Reading from the N-terminus, the 526-residue chain is Bifunctional purine biosynthesis protein PurH (526 aa).

Positions 1–148 constitute an MGS-like domain; that stretch reads MSLNNIIKNA…KNYKDVIVIV (148 aa).

The protein belongs to the PurH family.

The enzyme catalyses (6R)-10-formyltetrahydrofolate + 5-amino-1-(5-phospho-beta-D-ribosyl)imidazole-4-carboxamide = 5-formamido-1-(5-phospho-D-ribosyl)imidazole-4-carboxamide + (6S)-5,6,7,8-tetrahydrofolate. It catalyses the reaction IMP + H2O = 5-formamido-1-(5-phospho-D-ribosyl)imidazole-4-carboxamide. Its pathway is purine metabolism; IMP biosynthesis via de novo pathway; 5-formamido-1-(5-phospho-D-ribosyl)imidazole-4-carboxamide from 5-amino-1-(5-phospho-D-ribosyl)imidazole-4-carboxamide (10-formyl THF route): step 1/1. It functions in the pathway purine metabolism; IMP biosynthesis via de novo pathway; IMP from 5-formamido-1-(5-phospho-D-ribosyl)imidazole-4-carboxamide: step 1/1. This Buchnera aphidicola subsp. Schizaphis graminum (strain Sg) protein is Bifunctional purine biosynthesis protein PurH.